Here is a 1454-residue protein sequence, read N- to C-terminus: ABC transporter G family member 39 (1454 aa).

In terms of domain architecture, ABC transporter 1 spans 175–448 (LGFFHLLPSK…FEYFGFQCPE (274 aa)). 208 to 215 (GPPSSGKT) contacts ATP. Residues 526–739 (ELFKACFDRE…GQTAIVMNEF (214 aa)) enclose the ABC transmembrane type-2 1 domain. Transmembrane regions (helical) follow at residues 544–564 (FVYV…MTVY), 584–604 (MFFS…FTVM), 623–643 (FALP…GIWI), 663–683 (LLAY…LGAI), 689–709 (ISNS…GFII), 716–736 (PWMT…AIVM), and 775–795 (FWIC…FYIL). The span at 812 to 824 (EEGKDKQKGENRG) shows a compositional bias: basic and acidic residues. The interval 812–838 (EEGKDKQKGENRGTEGSVVELNSSSNK) is disordered. The 254-residue stretch at 853 to 1106 (LAFNNVNYYV…LVEYFEAVEG (254 aa)) folds into the ABC transporter 2 domain. 898-905 (GVSGAGKT) provides a ligand contact to ATP. The ABC transmembrane type-2 2 domain occupies 1178–1392 (TQTKACFWKQ…TLYGLITSQV (215 aa)). The next 7 membrane-spanning stretches (helical) occupy residues 1199-1219 (AIRF…FWQI), 1231-1251 (NFFG…AATV), 1285-1303 (IMYN…YSMI), 1312-1332 (FLWF…YGMM), 1342-1362 (IAGI…GFLI), 1367-1387 (IPIW…LYGL), and 1423-1443 (FLPV…FVFA).

The protein belongs to the ABC transporter superfamily. ABCG family. PDR (TC 3.A.1.205) subfamily.

It is found in the membrane. May be a general defense protein. In Arabidopsis thaliana (Mouse-ear cress), this protein is ABC transporter G family member 39 (ABCG39).